The following is a 151-amino-acid chain: FUN14 domain-containing protein 1A (151 aa).

The YXXL motif lies at 14–17; sequence YEVL. Helical transmembrane passes span 44–64, 71–91, and 130–150; these read YSVA…GFLF, AATA…GGYI, and FVKK…LGLA.

It belongs to the FUN14 family.

It localises to the mitochondrion outer membrane. Acts as an activator of hypoxia-induced mitophagy, an important mechanism for mitochondrial quality control. The protein is FUN14 domain-containing protein 1A (fundc1-a) of Xenopus laevis (African clawed frog).